The following is an 843-amino-acid chain: Eisosome protein 1 (843 aa).

Residues 1–53 form a disordered region; the sequence is MSLISAVEDRDIHNIGKTSGGGSRTSSITSSKKSLKHGSKSLRKPKVYQTTGE. At Ser-2 the chain carries N-acetylserine. Ser-2 carries the phosphoserine modification. Residues 33–46 are compositionally biased toward basic residues; it reads KSLKHGSKSLRKPK. A phosphoserine mark is found at Ser-88 and Ser-130. Positions 120–174 are disordered; that stretch reads KMGPKVVRNNSITSATSKTSKESQTKRKSKESPGAAASKAYSMTMETTSLSSQTN. 2 stretches are compositionally biased toward polar residues: residues 127–137 and 163–174; these read RNNSITSATSK and TMETTSLSSQTN. 4 positions are modified to phosphoserine: Ser-182, Ser-401, Ser-584, and Ser-710. The interval 717-843 is disordered; the sequence is DLPTQLEKIE…QDAISNQEKK (127 aa). At Thr-720 the chain carries Phosphothreonine. The segment covering 752–764 has biased composition (low complexity); the sequence is STAAKEATETSSA. 2 positions are modified to phosphoserine: Ser-763 and Ser-775. Residues 781-797 show a composition bias toward basic and acidic residues; the sequence is SGKEDANDCKSAEHSKE. Positions 798–810 are enriched in polar residues; sequence ISVSQKAGNNKSL. Residues Ser-816, Ser-828, Ser-829, and Ser-838 each carry the phosphoserine modification.

Belongs to the EIS1 family.

The protein localises to the cytoplasmic granule. It localises to the cell membrane. In terms of biological role, required for normal formation of eisosomes, large cytoplasmic protein assemblies that localize to specialized domains on plasma membrane and mark the site of endocytosis. This chain is Eisosome protein 1 (EIS1), found in Saccharomyces cerevisiae (strain ATCC 204508 / S288c) (Baker's yeast).